The primary structure comprises 868 residues: LPS-assembly protein LptD (868 aa).

The N-terminal stretch at 1-24 (MLKGIHKYLLMCFGTVLFTVQANA) is a signal peptide.

This sequence belongs to the LptD family. In terms of assembly, component of the lipopolysaccharide transport and assembly complex. Interacts with LptE and LptA.

The protein localises to the cell outer membrane. Its function is as follows. Together with LptE, is involved in the assembly of lipopolysaccharide (LPS) at the surface of the outer membrane. This chain is LPS-assembly protein LptD, found in Francisella tularensis subsp. tularensis (strain FSC 198).